The primary structure comprises 199 residues: Holliday junction branch migration complex subunit RuvA (199 aa).

The tract at residues 1-63 (MIGCLIGEVF…EDAQQLYGFS (63 aa)) is domain I. The tract at residues 64–142 (DAQEKTIFRT…TLAQGTSSAA (79 aa)) is domain II. The segment at 143–150 (ALPQIQFV) is flexible linker. Residues 150–199 (VSNSPVAEAEAALQSLGYKPLEAQKAVAAVKADYTESADIIRAALKSMMK) form a domain III region.

The protein belongs to the RuvA family. As to quaternary structure, homotetramer. Forms an RuvA(8)-RuvB(12)-Holliday junction (HJ) complex. HJ DNA is sandwiched between 2 RuvA tetramers; dsDNA enters through RuvA and exits via RuvB. An RuvB hexamer assembles on each DNA strand where it exits the tetramer. Each RuvB hexamer is contacted by two RuvA subunits (via domain III) on 2 adjacent RuvB subunits; this complex drives branch migration. In the full resolvosome a probable DNA-RuvA(4)-RuvB(12)-RuvC(2) complex forms which resolves the HJ.

It localises to the cytoplasm. In terms of biological role, the RuvA-RuvB-RuvC complex processes Holliday junction (HJ) DNA during genetic recombination and DNA repair, while the RuvA-RuvB complex plays an important role in the rescue of blocked DNA replication forks via replication fork reversal (RFR). RuvA specifically binds to HJ cruciform DNA, conferring on it an open structure. The RuvB hexamer acts as an ATP-dependent pump, pulling dsDNA into and through the RuvAB complex. HJ branch migration allows RuvC to scan DNA until it finds its consensus sequence, where it cleaves and resolves the cruciform DNA. The protein is Holliday junction branch migration complex subunit RuvA of Acinetobacter baumannii (strain SDF).